The primary structure comprises 420 residues: D-tagatose-1,6-bisphosphate aldolase subunit GatZ (420 aa).

It belongs to the GatZ/KbaZ family. GatZ subfamily. In terms of assembly, forms a complex with GatY.

It participates in carbohydrate metabolism; D-tagatose 6-phosphate degradation; D-glyceraldehyde 3-phosphate and glycerone phosphate from D-tagatose 6-phosphate: step 2/2. Component of the tagatose-1,6-bisphosphate aldolase GatYZ that is required for full activity and stability of the Y subunit. Could have a chaperone-like function for the proper and stable folding of GatY. When expressed alone, GatZ does not show any aldolase activity. Is involved in the catabolism of galactitol. The sequence is that of D-tagatose-1,6-bisphosphate aldolase subunit GatZ from Escherichia coli O139:H28 (strain E24377A / ETEC).